The following is a 701-amino-acid chain: F-box/LRR-repeat protein 17 (701 aa).

Disordered regions lie at residues 73 to 93 (SAGL…RDGA), 227 to 250 (GGGG…CQAP), and 279 to 321 (VRAG…IPDI). Residues 81 to 90 (PLSPPPPPPR) show a composition bias toward pro residues. The segment covering 227 to 236 (GGGGPAGGGA) has biased composition (gly residues). Residues 285-294 (APSSAQQQPE) show a composition bias toward polar residues. The F-box domain occupies 318–365 (IPDINQLPPSILLKIFSNLSLNERCLSASLVCKYWRDLCLDFQFWKQL).

This sequence belongs to the FBXL17 family. As to quaternary structure, part of the SCF (SKP1-CUL1-F-box) E3 ubiquitin-protein ligase complex SCF(FBXL17) composed of CUL1, SKP1, RBX1 and FBXL17. Interacts with BTB domain-containing proteins such as KLHL12, BCL6 and BACH1; specifically recognizes and binds a conserved degron of non-consecutive residues present at the interface of BTB dimers of aberrant composition. Interacts with SUFU. Interacts with PRMT1.

The protein resides in the cytoplasm. It localises to the nucleus. Substrate-recognition component of the SCF(FBXL17) E3 ubiquitin ligase complex, a key component of a quality control pathway required to ensure functional dimerization of BTB domain-containing proteins (dimerization quality control, DQC). FBXL17 specifically recognizes and binds a conserved degron of non-consecutive residues present at the interface of BTB dimers of aberrant composition: aberrant BTB dimer are then ubiquitinated by the SCF(FBXL17) complex and degraded by the proteasome. The ability of the SCF(FBXL17) complex to eliminate compromised BTB dimers is required for the differentiation and survival of neural crest and neuronal cells. The SCF(FBXL17) complex mediates ubiquitination and degradation of BACH1. The SCF(FBXL17) complex is also involved in the regulation of the hedgehog/smoothened (Hh) signaling pathway by mediating the ubiquitination and degradation of SUFU, allowing the release of GLI1 from SUFU for proper Hh signal transduction. The SCF(FBXL17) complex mediates ubiquitination and degradation of PRMT1. This chain is F-box/LRR-repeat protein 17, found in Mus musculus (Mouse).